Reading from the N-terminus, the 33-residue chain is NAD-reducing hydrogenase HoxS subunit gamma (33 aa).

The 2Fe-2S ferredoxin-type domain occupies 1–33 (SIEIEIDGVTVTTEESRTLVDVAAEAGVYIPTL).

This sequence belongs to the complex I 75 kDa subunit family. As to quaternary structure, tetramer of an alpha and a gamma subunits (flavin-containing dimer), and a delta and a nickel-containing beta subunits (hydrogenase dimer). The cofactor is [4Fe-4S] cluster.

The protein resides in the cytoplasm. The enzyme catalyses H2 + NAD(+) = NADH + H(+). In terms of biological role, subunits alpha and gamma of HoxS constitute an NADH--oxidoreductase. This is NAD-reducing hydrogenase HoxS subunit gamma (hoxU) from Rhodococcus opacus (Nocardia opaca).